Consider the following 1042-residue polypeptide: Signal-induced proliferation-associated protein 1 (1042 aa).

Disordered regions lie at residues 1 to 87 and 132 to 153; these read MPMW…TSTR and SQGM…EDQA. Thr64 bears the Phosphothreonine mark. Residue Ser67 is modified to Phosphoserine. Positions 134-146 are enriched in polar residues; it reads GMGSHSEASSGTL. Phosphoserine occurs at positions 182, 304, and 314. One can recognise a Rap-GAP domain in the interval 321–539; sequence LLTLDEQVLS…RTRQQYLQDL (219 aa). Positions 687–763 constitute a PDZ domain; that stretch reads ELALPRDGQG…VCVTVLPPDE (77 aa). Phosphoserine occurs at positions 817, 839, and 912. Residues 830-903 form a disordered region; sequence EFLHSQNSLS…PAPELRASFL (74 aa). Residues 832 to 845 show a composition bias toward low complexity; that stretch reads LHSQNSLSPRSSLS. The disordered stretch occupies residues 946-980; sequence LSREGQPIPESGDPKGTPKSDAEPEPGNLSEKVSH. Residues 957–967 are compositionally biased toward basic and acidic residues; the sequence is GDPKGTPKSDA. A coiled-coil region spans residues 972–1034; that stretch reads GNLSEKVSHL…TRLLLASKQL (63 aa).

In terms of assembly, interacts with RRP1B; the interaction leads to inhibition of SIPA1 GTPase activity. In terms of tissue distribution, expressed in fetal as well as in adult tissues. Expressed abundantly in the lymphoid tissues such as thymus, spleen and peripheral blood lymphocytes and also shows a significant expression in the spinal cord.

The protein localises to the nucleus. The protein resides in the cytoplasm. It localises to the perinuclear region. It is found in the endomembrane system. Functionally, GTPase activator for the nuclear Ras-related regulatory proteins Rap1 and Rap2 in vitro, converting them to the putatively inactive GDP-bound state. Affects cell cycle progression. The polypeptide is Signal-induced proliferation-associated protein 1 (SIPA1) (Homo sapiens (Human)).